An 861-amino-acid polypeptide reads, in one-letter code: Homeobox-leucine zipper protein HOX29 (861 aa).

A DNA-binding region (homeobox) is located at residues 2 to 65 (DASKYVRYTP…NRRCREKQRK (64 aa)). Residues 57-99 (RRCREKQRKESSRLQALNRKLTAMNKLLMEENDRLQKQVSQLV) are a coiled coil. The region spanning 162–390 (RDASPAGLMS…VAHEDTRSVI (229 aa)) is the START domain.

It belongs to the HD-ZIP homeobox family. Class III subfamily. As to expression, expressed in roots, stems and leaf blades.

The protein localises to the nucleus. Probable transcription factor. This is Homeobox-leucine zipper protein HOX29 (HOX29) from Oryza sativa subsp. indica (Rice).